The sequence spans 447 residues: Argininosuccinate synthase (447 aa).

ATP-binding positions include 17-25 and A43; that span reads AFSGGLDTS. Residue Y99 coordinates L-citrulline. ATP contacts are provided by G129 and T131. Residues T131, N135, and D136 each coordinate L-aspartate. N135 contacts L-citrulline. ATP is bound at residue D136. The L-citrulline site is built by R139 and S192. Position 194 (D194) interacts with ATP. The L-citrulline site is built by T201, E203, and E280.

This sequence belongs to the argininosuccinate synthase family. Type 2 subfamily. Homotetramer.

Its subcellular location is the cytoplasm. It carries out the reaction L-citrulline + L-aspartate + ATP = 2-(N(omega)-L-arginino)succinate + AMP + diphosphate + H(+). It participates in amino-acid biosynthesis; L-arginine biosynthesis; L-arginine from L-ornithine and carbamoyl phosphate: step 2/3. The protein is Argininosuccinate synthase of Salmonella dublin (strain CT_02021853).